The sequence spans 436 residues: 3-ketoacyl-CoA thiolase (436 aa).

The Acyl-thioester intermediate role is filled by cysteine 99. Catalysis depends on proton acceptor residues histidine 392 and cysteine 422.

It belongs to the thiolase-like superfamily. Thiolase family. Heterotetramer of two alpha chains (FadJ) and two beta chains (FadI).

It localises to the cytoplasm. It carries out the reaction an acyl-CoA + acetyl-CoA = a 3-oxoacyl-CoA + CoA. The protein operates within lipid metabolism; fatty acid beta-oxidation. Functionally, catalyzes the final step of fatty acid oxidation in which acetyl-CoA is released and the CoA ester of a fatty acid two carbons shorter is formed. In Yersinia pseudotuberculosis serotype O:1b (strain IP 31758), this protein is 3-ketoacyl-CoA thiolase.